The sequence spans 728 residues: Catalase-peroxidase (728 aa).

The N-terminal stretch at 1-16 (MDNPTDSAGKCPVAHG) is a signal peptide. Residues 1–26 (MDNPTDSAGKCPVAHGNTPRSRSNRD) form a disordered region. The tryptophyl-tyrosyl-methioninium (Trp-Tyr) (with M-244) cross-link spans 96–218 (WHSAGTYRIT…LGAVQMGFIY (123 aa)). Histidine 97 (proton acceptor) is an active-site residue. A cross-link (tryptophyl-tyrosyl-methioninium (Tyr-Met) (with W-96)) is located at residues 218-244 (YVNPEGPNGNSDPLASARDIRETFARM). Heme b is bound at residue histidine 259.

The protein belongs to the peroxidase family. Peroxidase/catalase subfamily. As to quaternary structure, homodimer or homotetramer. The cofactor is heme b. In terms of processing, formation of the three residue Trp-Tyr-Met cross-link is important for the catalase, but not the peroxidase activity of the enzyme.

It catalyses the reaction H2O2 + AH2 = A + 2 H2O. The catalysed reaction is 2 H2O2 = O2 + 2 H2O. In terms of biological role, bifunctional enzyme with both catalase and broad-spectrum peroxidase activity. The protein is Catalase-peroxidase of Rhizobium leguminosarum bv. phaseoli.